The chain runs to 282 residues: UDP-3-O-acyl-N-acetylglucosamine deacetylase (282 aa).

Positions 74, 226, and 230 each coordinate Zn(2+). Catalysis depends on His253, which acts as the Proton donor.

This sequence belongs to the LpxC family. It depends on Zn(2+) as a cofactor.

It catalyses the reaction a UDP-3-O-[(3R)-3-hydroxyacyl]-N-acetyl-alpha-D-glucosamine + H2O = a UDP-3-O-[(3R)-3-hydroxyacyl]-alpha-D-glucosamine + acetate. It participates in glycolipid biosynthesis; lipid IV(A) biosynthesis; lipid IV(A) from (3R)-3-hydroxytetradecanoyl-[acyl-carrier-protein] and UDP-N-acetyl-alpha-D-glucosamine: step 2/6. Catalyzes the hydrolysis of UDP-3-O-myristoyl-N-acetylglucosamine to form UDP-3-O-myristoylglucosamine and acetate, the committed step in lipid A biosynthesis. This Aquifex aeolicus (strain VF5) protein is UDP-3-O-acyl-N-acetylglucosamine deacetylase.